Reading from the N-terminus, the 288-residue chain is Shikimate dehydrogenase (NADP(+)) (288 aa).

Shikimate-binding positions include 15-17 (SKS) and Thr64. Lys68 acts as the Proton acceptor in catalysis. Glu83 provides a ligand contact to NADP(+). Shikimate contacts are provided by Asn92 and Asp117. Residues 141–145 (GAGGA), 165–170 (NRTVSK), and Met232 contribute to the NADP(+) site. Tyr234 contacts shikimate. Gly254 lines the NADP(+) pocket.

Belongs to the shikimate dehydrogenase family. Homodimer.

It catalyses the reaction shikimate + NADP(+) = 3-dehydroshikimate + NADPH + H(+). Its pathway is metabolic intermediate biosynthesis; chorismate biosynthesis; chorismate from D-erythrose 4-phosphate and phosphoenolpyruvate: step 4/7. In terms of biological role, involved in the biosynthesis of the chorismate, which leads to the biosynthesis of aromatic amino acids. Catalyzes the reversible NADPH linked reduction of 3-dehydroshikimate (DHSA) to yield shikimate (SA). The protein is Shikimate dehydrogenase (NADP(+)) of Psychrobacter cryohalolentis (strain ATCC BAA-1226 / DSM 17306 / VKM B-2378 / K5).